A 1487-amino-acid polypeptide reads, in one-letter code: Collagen alpha-1(II) chain (1487 aa).

The signal sequence occupies residues 1–25 (MIRLGAPQTLVLLTLLVAAVLRCQG). A propeptide spans 26 to 181 (QDVQEAGSCV…PPGLGGNFAA (156 aa)) (N-terminal propeptide). In terms of domain architecture, VWFC spans 32–90 (GSCVQDGQRYNDKDVWKPEPCRICVCDTGTVLCDDIICEDVKDCLSPEIPFGECCPICP). Positions 97–1237 (SGQPGPKGQK…PREKGPDPLQ (1141 aa)) are disordered. Basic and acidic residues-rich tracts occupy residues 105 to 116 (QKGEPGDIKDIV) and 133 to 154 (PRGD…RDGE). Residues 158–173 (PGNPGPPGPPGPPGPP) show a composition bias toward pro residues. At K190 the chain carries 5-hydroxylysine. The O-linked (Gal...) hydroxylysine glycan is linked to K190. The interval 201 to 1214 (GPMGPMGPRG…PGPPGPPGPP (1014 aa)) is triple-helical region. Residues 208 to 217 (PRGPPGPAGA) show a composition bias toward pro residues. Over residues 218–239 (PGPQGFQGNPGEPGEPGVSGPM) the composition is skewed to low complexity. Pro residues predominate over residues 241-250 (PRGPPGPPGK). Residues 251 to 265 (PGDDGEAGKPGKAGE) are compositionally biased toward basic and acidic residues. A 5-hydroxylysine mark is found at K287, K299, and K308. 3 O-linked (Gal...) hydroxylysine glycosylation sites follow: K287, K299, and K308. Low complexity-rich tracts occupy residues 310–320 (ESGSPGENGSP) and 335–350 (TGPA…DGQP). Gly residues predominate over residues 360 to 369 (GPAGGPGFPG). Composition is skewed to low complexity over residues 370 to 382 (APGA…PTGA) and 391 to 431 (PRGE…AGAP). K374 is subject to 5-hydroxylysine. The O-linked (Gal...) hydroxylysine glycan is linked to K374. Residues 433-442 (FPGPRGPPGP) show a composition bias toward pro residues. A 5-hydroxylysine mark is found at K608 and K620. 2 O-linked (Gal...) hydroxylysine glycosylation sites follow: K608 and K620. Low complexity-rich tracts occupy residues 622 to 631 (LPGAPGLRGL) and 656 to 667 (QGAPGPSGFQGL). 2 positions are modified to 4-hydroxyproline: P659 and P668. At P670 the chain carries 3-hydroxyproline. 2 positions are modified to 4-hydroxyproline: P671 and P674. Positions 764 to 775 (KGDRGDVGEKGP) are enriched in basic and acidic residues. 2 stretches are compositionally biased toward low complexity: residues 833–848 (AGFA…PGAK) and 877–913 (PTGV…SNGN). At P907 the chain carries 3-hydroxyproline. 3 positions are modified to 4-hydroxyproline: P908, P914, and P920. A compositionally biased stretch (pro residues) spans 1069–1079 (APGPPGSPGPA). Positions 1115-1129 (RGDKGEAGEPGERGL) are enriched in basic and acidic residues. The residue at position 1130 (K1130) is a 5-hydroxylysine. K1130 carries an O-linked (Gal...) hydroxylysine glycan. P1144 is modified (3-hydroxyproline). A compositionally biased stretch (low complexity) spans 1148–1157 (SGDQGASGPA). P1181 is subject to 4-hydroxyproline. At P1186 the chain carries 3-hydroxyproline. At P1187 the chain carries 4-hydroxyproline. Over residues 1199-1216 (AGPPGNPGPPGPPGPPGP) the composition is skewed to pro residues. At P1201 the chain carries 3-hydroxyproline. 4-hydroxyproline occurs at positions 1202 and 1205. P1207 is modified (3-hydroxyproline). P1208 and P1211 each carry 4-hydroxyproline. The residue at position 1213 (P1213) is a 3-hydroxyproline. P1214 is subject to 4-hydroxyproline. The segment at 1215–1241 (GPGIDMSAFAGLGPREKGPDPLQYMRA) is nonhelical region (C-terminal). Positions 1253 to 1487 (AEVDATLKSL…GVDIGPVCFL (235 aa)) constitute a Fibrillar collagen NC1 domain. Cystine bridges form between C1283/C1315, C1323/C1485, and C1393/C1438. Ca(2+) is bound by residues D1301, N1303, Q1304, C1306, and D1309. N-linked (GlcNAc...) asparagine glycosylation is present at N1388.

It belongs to the fibrillar collagen family. In terms of assembly, homotrimers of alpha 1(II) chains. Post-translationally, the N-telopeptide is covalently linked to the helical COL2 region of alpha 1(IX), alpha 2(IX) and alpha 3(IX) chain. The C-telopeptide is covalently linked to an another site in the helical region of alpha 3(IX) COL2. Contains mostly 4-hydroxyproline. Prolines at the third position of the tripeptide repeating unit (G-X-P) are 4-hydroxylated in some or all of the chains. In terms of processing, contains 3-hydroxyproline at a few sites. This modification occurs on the first proline residue in the sequence motif Gly-Pro-Hyp, where Hyp is 4-hydroxyproline. Post-translationally, lysine residues at the third position of the tripeptide repeating unit (G-X-Y) are 5-hydroxylated in some or all of the chains. O-glycosylated on hydroxylated lysine residues. The O-linked glycan consists of a Glc-Gal disaccharide. As to expression, isoform 2 is highly expressed in juvenile chondrocyte and low in fetal chondrocyte.

It localises to the secreted. The protein resides in the extracellular space. The protein localises to the extracellular matrix. Type II collagen is specific for cartilaginous tissues. It is essential for the normal embryonic development of the skeleton, for linear growth and for the ability of cartilage to resist compressive forces. The sequence is that of Collagen alpha-1(II) chain from Homo sapiens (Human).